Here is a 279-residue protein sequence, read N- to C-terminus: MTQPDRYAVFGHPIEHSQSPRIHALFAAQTGQDLIYTAEDVPPDRFESCVRAFFDGGGRGLNCTIPLKEMAWLLADSRSGRAKRARAVNTLLLRADGSIFGDNTDGIGLLRDLRDNLGLNLAGTKILILGAGGATRGILAPLLAERPDRLVIANRTVATAETLTVEFGDLGPVEGCGFAALAGRRFDLIINATAASLSGELPPLPADILAPGGSCYDLAYAAEPTPFVRWGQEKQAVVSADGIGMLVEQAAEAFLLWRGVRPQTRPVIETLEAERRTAK.

Residues 17 to 19 and Thr64 each bind shikimate; that span reads SQS. Lys68 functions as the Proton acceptor in the catalytic mechanism. 2 residues coordinate shikimate: Asn89 and Asp105. Residues 130-134 and Leu218 each bind NADP(+); that span reads GAGGA. Shikimate is bound at residue Tyr220. Gly242 serves as a coordination point for NADP(+).

It belongs to the shikimate dehydrogenase family. Homodimer.

The enzyme catalyses shikimate + NADP(+) = 3-dehydroshikimate + NADPH + H(+). Its pathway is metabolic intermediate biosynthesis; chorismate biosynthesis; chorismate from D-erythrose 4-phosphate and phosphoenolpyruvate: step 4/7. In terms of biological role, involved in the biosynthesis of the chorismate, which leads to the biosynthesis of aromatic amino acids. Catalyzes the reversible NADPH linked reduction of 3-dehydroshikimate (DHSA) to yield shikimate (SA). This Methylococcus capsulatus (strain ATCC 33009 / NCIMB 11132 / Bath) protein is Shikimate dehydrogenase (NADP(+)).